Here is a 567-residue protein sequence, read N- to C-terminus: Myo-inositol transporter 1 (567 aa).

Over 1–88 (MSARPAQPNI…KFVWMLVSAA (88 aa)) the chain is Cytoplasmic. A disordered region spans residues 14–42 (IRTSLSGYPSPTHSGSSTPASLEFSDGRL). The segment covering 16 to 33 (TSLSGYPSPTHSGSSTPA) has biased composition (polar residues). The chain crosses the membrane as a helical span at residues 89-109 (AISGLLFGYDTAAISGMLVII). Topologically, residues 110 to 123 (KDDLGTILSSWQKE) are extracellular. The chain crosses the membrane as a helical span at residues 124 to 144 (VITSATTLGALLGGLAAGCVS). Residues 145 to 150 (DFTGRR) are Cytoplasmic-facing. A helical transmembrane segment spans residues 151–171 (LVIVFANVAFIGGSICQAACH). Residues 172–180 (TVAAMIAGR) are Extracellular-facing. Residues 181-201 (FIVGLGVGLASCIVPLYIGEL) form a helical membrane-spanning segment. The Cytoplasmic segment spans residues 202–209 (APTMIRGR). Residues 210–230 (LVTINCVAVTLGQVVAYAIGA) form a helical membrane-spanning segment. Residues 231–240 (SFQNVHNGWR) are Extracellular-facing. A helical membrane pass occupies residues 241–261 (WIVGLGAMPSFVQLAAIGFLP). Over 262-343 (ESPRILLLRS…IGCGLQAAQQ (82 aa)) the chain is Cytoplasmic. The chain crosses the membrane as a helical span at residues 344 to 364 (LCGFNTLMYYSATIFAMLGFN). An N-linked (GlcNAc...) asparagine glycan is attached at N365. Over 365-367 (NAT) the chain is Extracellular. The helical transmembrane segment at 368–388 (AVGLIVATVNVLFTLVALKIV) threads the bilayer. Topologically, residues 389–397 (DPVGRRRTM) are cytoplasmic. Residues 398 to 418 (LFTLPIMILALVFAAIFFYYL) traverse the membrane as a helical segment. At 419–435 (TLSTNGILIEDHDYPRS) the chain is on the extracellular side. Residues 436–456 (LSILVLLSMLLYVAGYATGLG) traverse the membrane as a helical segment. The Cytoplasmic portion of the chain corresponds to 457–476 (NIPWQQGELFRLEVRGIGTS). Residues 477-497 (ICTAVNWSCNMLIAGTFLSLM) form a helical membrane-spanning segment. At 498-503 (DAATPS) the chain is on the extracellular side. Residues 504–524 (GAFGIYAGFCVIGWVFCWMLY) traverse the membrane as a helical segment. Residues 525–567 (PETSGLSLEEVYFVFEEGFGIKKSQQLRKQKLVEAAKLKAIFE) lie on the Cytoplasmic side of the membrane.

This sequence belongs to the major facilitator superfamily. Sugar transporter (TC 2.A.1.1) family.

It is found in the cell membrane. It carries out the reaction myo-inositol(out) + H(+)(out) = myo-inositol(in) + H(+)(in). Functionally, may function as a transporter or as a sensor for myo-inositol. The chain is Myo-inositol transporter 1 from Cryptococcus neoformans var. grubii serotype A (strain H99 / ATCC 208821 / CBS 10515 / FGSC 9487) (Filobasidiella neoformans var. grubii).